Reading from the N-terminus, the 307-residue chain is Acetyl-coenzyme A carboxylase carboxyl transferase subunit beta (307 aa).

Residues 28 to 297 enclose the CoA carboxyltransferase N-terminal domain; the sequence is LWVKCPDTGQ…TPEPGTAPEP (270 aa). Positions 286–307 are disordered; it reads RRTPEPGTAPEPTTPEPLPNAA. Positions 292-307 are enriched in pro residues; sequence GTAPEPTTPEPLPNAA.

The protein belongs to the AccD/PCCB family. Acetyl-CoA carboxylase is a heterohexamer composed of biotin carboxyl carrier protein (AccB), biotin carboxylase (AccC) and two subunits each of ACCase subunit alpha (AccA) and ACCase subunit beta (AccD).

The protein localises to the cytoplasm. The enzyme catalyses N(6)-carboxybiotinyl-L-lysyl-[protein] + acetyl-CoA = N(6)-biotinyl-L-lysyl-[protein] + malonyl-CoA. Its pathway is lipid metabolism; malonyl-CoA biosynthesis; malonyl-CoA from acetyl-CoA: step 1/1. Functionally, component of the acetyl coenzyme A carboxylase (ACC) complex. Biotin carboxylase (BC) catalyzes the carboxylation of biotin on its carrier protein (BCCP) and then the CO(2) group is transferred by the transcarboxylase to acetyl-CoA to form malonyl-CoA. This is Acetyl-coenzyme A carboxylase carboxyl transferase subunit beta from Methylorubrum extorquens (strain ATCC 14718 / DSM 1338 / JCM 2805 / NCIMB 9133 / AM1) (Methylobacterium extorquens).